A 263-amino-acid chain; its full sequence is Proteasome subunit alpha type-1 (263 aa).

Residue M1 is modified to N-acetylmethionine. A Phosphoserine; alternate modification is found at S110. Residue S110 is glycosylated (O-linked (GlcNAc) serine; alternate). A Glycyl lysine isopeptide (Lys-Gly) (interchain with G-Cter in ubiquitin) cross-link involves residue K115. S177 is modified (phosphoserine). K208 participates in a covalent cross-link: Glycyl lysine isopeptide (Lys-Gly) (interchain with G-Cter in ubiquitin). The segment at F232–H263 is disordered. Residues P253–H263 are compositionally biased toward basic and acidic residues.

This sequence belongs to the peptidase T1A family. In terms of assembly, the 26S proteasome consists of a 20S proteasome core and two 19S regulatory subunits. The 20S proteasome core is a barrel-shaped complex made of 28 subunits that are arranged in four stacked rings. The two outer rings are each formed by seven alpha subunits, and the two inner rings are formed by seven beta subunits. The proteolytic activity is exerted by three beta-subunits PSMB5, PSMB6 and PSMB7. Interacts with NOTCH3. Interacts with ZFAND1. Post-translationally, C-terminal extension is partially cleaved off by limited proteolysis leading to a conversion of the proteasome from its latent into its active form. Detected in liver (at protein level).

It localises to the cytoplasm. The protein localises to the nucleus. In terms of biological role, component of the 20S core proteasome complex involved in the proteolytic degradation of most intracellular proteins. This complex plays numerous essential roles within the cell by associating with different regulatory particles. Associated with two 19S regulatory particles, forms the 26S proteasome and thus participates in the ATP-dependent degradation of ubiquitinated proteins. The 26S proteasome plays a key role in the maintenance of protein homeostasis by removing misfolded or damaged proteins that could impair cellular functions, and by removing proteins whose functions are no longer required. Associated with the PA200 or PA28, the 20S proteasome mediates ubiquitin-independent protein degradation. This type of proteolysis is required in several pathways including spermatogenesis (20S-PA200 complex) or generation of a subset of MHC class I-presented antigenic peptides (20S-PA28 complex). The protein is Proteasome subunit alpha type-1 (Psma1) of Mus musculus (Mouse).